A 488-amino-acid chain; its full sequence is Cytochrome P450 monooxygenase orf2 (488 aa).

Residues 7-27 (LPGIFLPLAGCVLALSLTTIV) traverse the membrane as a helical segment. Cys432 is a heme binding site.

This sequence belongs to the cytochrome P450 family. The cofactor is heme.

It localises to the membrane. It functions in the pathway secondary metabolite biosynthesis. In terms of biological role, cytochrome P450 monooxygenase; part of the gene cluster that mediates the biosynthesis of nigerpyrone and its derivatives carbonarone A and pestalamide A. The biosynthesis pathway begins with the polyketide assembly by epaA to form phenylacetyl triketide precursor from successive condensation of two malonyl-CoA, presumably with one phenylacetyl-CoA starter unit produced by the phenylacetyl-CoA ligase epaB. For the nigerpyrone biosynthesis, the reactive polyketide chain is released as an aldehyde through the R-domain. A nonenzymatic cyclization and dehydration may create nigerpyrone. For the biosynthesis of carbonarone A and pestalamide A, an extra methyl group is added through the C-methyltransferase domain. Several further steps involving the dehydrogenase orf1, the cytochrome P450 monooxygenase orf2 and the FAD-dependent monooxygenase orf3 are required to form a carbonarone A precursor which is converted to carbonarone A via cyclization. The O-acetyltransferase epaC could catalyze the transfer of 2-methylsuccinyl-CoA, a common intermediate in the ethylmalonyl-CoA pathway, to generate the final product pestalamide A. The chain is Cytochrome P450 monooxygenase orf2 from Aspergillus niger (strain ATCC MYA-4892 / CBS 513.88 / FGSC A1513).